The chain runs to 234 residues: UPF0758 protein Rfer_3252 (234 aa).

The 123-residue stretch at 112-234 (IFATPDAVKH…ALSMAERGLL (123 aa)) folds into the MPN domain. Residues histidine 183, histidine 185, and aspartate 196 each contribute to the Zn(2+) site. Residues 183 to 196 (HNHPSGTVQPSRAD) carry the JAMM motif motif.

It belongs to the UPF0758 family.

This is UPF0758 protein Rfer_3252 from Albidiferax ferrireducens (strain ATCC BAA-621 / DSM 15236 / T118) (Rhodoferax ferrireducens).